The chain runs to 133 residues: Protein NrdI (133 aa).

Belongs to the NrdI family.

In terms of biological role, probably involved in ribonucleotide reductase function. This is Protein NrdI from Cronobacter sakazakii (strain ATCC BAA-894) (Enterobacter sakazakii).